We begin with the raw amino-acid sequence, 150 residues long: uncharacterized protein (150 aa).

Transmembrane regions (helical) follow at residues V50–L70, L80–L100, and K127–E147.

It localises to the membrane. This is an uncharacterized protein from Schizosaccharomyces pombe (strain 972 / ATCC 24843) (Fission yeast).